A 69-amino-acid polypeptide reads, in one-letter code: uncharacterized protein (69 aa).

2 consecutive 4Fe-4S ferredoxin-type domains span residues 2 to 30 (KIEI…KSKK) and 38 to 67 (PPIP…IELS). C10, C13, C16, C20, C47, C50, C53, and C57 together coordinate [4Fe-4S] cluster.

The cofactor is [4Fe-4S] cluster.

This is an uncharacterized protein from Methanocaldococcus jannaschii (strain ATCC 43067 / DSM 2661 / JAL-1 / JCM 10045 / NBRC 100440) (Methanococcus jannaschii).